A 391-amino-acid polypeptide reads, in one-letter code: Cytochrome b (391 aa).

4 consecutive transmembrane segments (helical) span residues phenylalanine 33 to methionine 53, tryptophan 77 to isoleucine 98, tryptophan 113 to leucine 133, and phenylalanine 178 to leucine 198. Heme b contacts are provided by histidine 83 and histidine 97. Positions 182 and 196 each coordinate heme b. A ubiquinone is bound at residue histidine 201. 4 helical membrane passes run tyrosine 226–isoleucine 246, leucine 288–histidine 308, leucine 320–glycine 340, and phenylalanine 347–proline 367.

This sequence belongs to the cytochrome b family. As to quaternary structure, the cytochrome bc1 complex contains 3 respiratory subunits (MT-CYB, CYC1 and UQCRFS1), 2 core proteins (UQCRC1 and UQCRC2) and probably 6 low-molecular weight proteins. The cofactor is heme b.

Its subcellular location is the mitochondrion inner membrane. Component of the ubiquinol-cytochrome c reductase complex (complex III or cytochrome b-c1 complex) that is part of the mitochondrial respiratory chain. The b-c1 complex mediates electron transfer from ubiquinol to cytochrome c. Contributes to the generation of a proton gradient across the mitochondrial membrane that is then used for ATP synthesis. The protein is Cytochrome b (mt-cyb) of Kryptolebias marmoratus (Mangrove killifish).